A 367-amino-acid chain; its full sequence is Phosphoribosylaminoimidazole-succinocarboxamide synthase (367 aa).

The protein belongs to the SAICAR synthetase family.

The catalysed reaction is 5-amino-1-(5-phospho-D-ribosyl)imidazole-4-carboxylate + L-aspartate + ATP = (2S)-2-[5-amino-1-(5-phospho-beta-D-ribosyl)imidazole-4-carboxamido]succinate + ADP + phosphate + 2 H(+). Its pathway is purine metabolism; IMP biosynthesis via de novo pathway; 5-amino-1-(5-phospho-D-ribosyl)imidazole-4-carboxamide from 5-amino-1-(5-phospho-D-ribosyl)imidazole-4-carboxylate: step 1/2. The polypeptide is Phosphoribosylaminoimidazole-succinocarboxamide synthase (Vibrio vulnificus (strain CMCP6)).